The primary structure comprises 238 residues: Large ribosomal subunit protein uL2 (238 aa).

The interval 199-238 is disordered; that stretch reads PHGGGLHQSVSRPSTVSRNAPPGRKVGHIAARRTGRKEGA. The segment covering 206-216 has biased composition (polar residues); the sequence is QSVSRPSTVSR. Residues 223-238 show a composition bias toward basic residues; the sequence is KVGHIAARRTGRKEGA.

This sequence belongs to the universal ribosomal protein uL2 family. In terms of assembly, part of the 50S ribosomal subunit. Forms a bridge to the 30S subunit in the 70S ribosome.

Its function is as follows. One of the primary rRNA binding proteins. Required for association of the 30S and 50S subunits to form the 70S ribosome, for tRNA binding and peptide bond formation. It has been suggested to have peptidyltransferase activity; this is somewhat controversial. Makes several contacts with the 16S rRNA in the 70S ribosome. The protein is Large ribosomal subunit protein uL2 of Sulfurisphaera tokodaii (strain DSM 16993 / JCM 10545 / NBRC 100140 / 7) (Sulfolobus tokodaii).